A 360-amino-acid chain; its full sequence is Homoserine O-succinyltransferase (360 aa).

Cysteine 146 acts as the Acyl-thioester intermediate in catalysis. The substrate site is built by lysine 167 and serine 196. Histidine 239 serves as the catalytic Proton acceptor. Residue glutamate 241 is part of the active site. Arginine 253 contributes to the substrate binding site.

It belongs to the MetA family.

It is found in the cytoplasm. It catalyses the reaction L-homoserine + succinyl-CoA = O-succinyl-L-homoserine + CoA. Its pathway is amino-acid biosynthesis; L-methionine biosynthesis via de novo pathway; O-succinyl-L-homoserine from L-homoserine: step 1/1. Transfers a succinyl group from succinyl-CoA to L-homoserine, forming succinyl-L-homoserine. In vitro, can also use glutaryl-CoA as acyl donor. This is Homoserine O-succinyltransferase from Thiothrix nivea (strain ATCC 35100 / DSM 5205 / JP2).